We begin with the raw amino-acid sequence, 210 residues long: FMN-dependent NADH:quinone oxidoreductase (210 aa).

FMN is bound by residues 17 to 19 and 148 to 151; these read SCS and SSGG.

Belongs to the azoreductase type 1 family. In terms of assembly, homodimer. It depends on FMN as a cofactor.

It catalyses the reaction 2 a quinone + NADH + H(+) = 2 a 1,4-benzosemiquinone + NAD(+). The catalysed reaction is N,N-dimethyl-1,4-phenylenediamine + anthranilate + 2 NAD(+) = 2-(4-dimethylaminophenyl)diazenylbenzoate + 2 NADH + 2 H(+). Quinone reductase that provides resistance to thiol-specific stress caused by electrophilic quinones. Functionally, also exhibits azoreductase activity. Catalyzes the reductive cleavage of the azo bond in aromatic azo compounds to the corresponding amines. In Geotalea uraniireducens (strain Rf4) (Geobacter uraniireducens), this protein is FMN-dependent NADH:quinone oxidoreductase.